A 243-amino-acid polypeptide reads, in one-letter code: NAD-dependent protein deacetylase (243 aa).

In terms of domain architecture, Deacetylase sirtuin-type spans Met-1 to Glu-243. Residues Ala-24, Phe-35, Arg-36, Gln-105, Ile-107, Asp-108, and His-123 each contribute to the NAD(+) site. Phe-35 contributes to the nicotinamide binding site. Residues Ile-107 and Asp-108 each coordinate nicotinamide. His-123 functions as the Proton acceptor in the catalytic mechanism. Residues Cys-131, Cys-134, Cys-151, and Cys-154 each contribute to the Zn(2+) site. NAD(+)-binding residues include Ser-192, Ser-193, Asn-215, and Asp-232.

This sequence belongs to the sirtuin family. Class U subfamily. It depends on Zn(2+) as a cofactor.

It localises to the cytoplasm. The enzyme catalyses N(6)-acetyl-L-lysyl-[protein] + NAD(+) + H2O = 2''-O-acetyl-ADP-D-ribose + nicotinamide + L-lysyl-[protein]. Functionally, NAD-dependent protein deacetylase which modulates the activities of several enzymes which are inactive in their acetylated form. The sequence is that of NAD-dependent protein deacetylase from Staphylococcus aureus (strain NCTC 8325 / PS 47).